Here is a 216-residue protein sequence, read N- to C-terminus: GTP-binding nuclear protein spi1 (216 aa).

Residues 6–170 enclose the Small GTPase Ran-type domain; sequence NVPTFKLVLV…LWLARKLVGN (165 aa). Residue 17 to 24 coordinates GTP; that stretch reads DGGTGKTT. Thr20 carries the phosphothreonine modification. The switch-I stretch occupies residues 36–44; it reads KKYIATLGV. GTP-binding positions include Gly67, 121-124, and 149-151; these read NKVD and SAK. A switch-II region spans residues 67-83; it reads GQEKLGGLRDGYYIQGQ.

This sequence belongs to the small GTPase superfamily. Ran family. As to quaternary structure, oligomer of dis3, pim1 and spi1. Found in a nuclear export complex with RanGTP, exportin and pre-miRNA. Interacts with fft3.

Its subcellular location is the nucleus. In terms of biological role, GTP-binding protein involved in nucleocytoplasmic transport. Required for the import of protein into the nucleus and also for RNA export. This is GTP-binding nuclear protein spi1 (spi1) from Schizosaccharomyces pombe (strain 972 / ATCC 24843) (Fission yeast).